An 87-amino-acid polypeptide reads, in one-letter code: Kappa-3-bungarotoxin (87 aa).

An N-terminal signal peptide occupies residues 1–21 (MKTLLLSLVVVTIVCLDLGYT). 5 disulfides stabilise this stretch: Cys24/Cys42, Cys35/Cys63, Cys48/Cys52, Cys67/Cys79, and Cys80/Cys85.

Belongs to the three-finger toxin family. Long-chain subfamily. Kappa-neurotoxin sub-subfamily. In terms of assembly, homodimer and heterodimer with kappa 2-bungarotoxin; non-covalently-linked. As to expression, expressed by the venom gland.

The protein resides in the secreted. Its function is as follows. Postsynaptic neurotoxin that binds and inhibits neuronal nicotinic acetylcholine receptors (nAChR) with high affinity (IC(50)&lt;100 nM). Is a selective, and slowly reversible antagonist of alpha-3/CHRNA3-containing and some alpha-4/CHRNA4-containing AChRs. This is Kappa-3-bungarotoxin from Bungarus multicinctus (Many-banded krait).